The primary structure comprises 134 residues: ATP synthase epsilon chain (134 aa).

It belongs to the ATPase epsilon chain family. In terms of assembly, F-type ATPases have 2 components, CF(1) - the catalytic core - and CF(0) - the membrane proton channel. CF(1) has five subunits: alpha(3), beta(3), gamma(1), delta(1), epsilon(1). CF(0) has three main subunits: a, b and c.

Its subcellular location is the cellular thylakoid membrane. In terms of biological role, produces ATP from ADP in the presence of a proton gradient across the membrane. This Prochlorococcus marinus (strain MIT 9312) protein is ATP synthase epsilon chain.